The chain runs to 356 residues: MSLWVDKYRPSSLARLDYHKEQAAQLRNLVQCGDFPHLLVYGPSGAGKKTRIMCILRELYGIGVEKLRIEHQTITTPSKKKIEISTIASNYHLEVNPSDAGNSDRVVIQEMLKTVAQSQQLETSSQRDFKVVLLTEVDKLTKDAQHALRRTMEKYMSTCRLILCCNSTSKVIPPIRSRCLAVRVPAPSIEDICSVLSTVCRKEGLALPSTLARRLAEKSCRNLRKALLMCEACRVQQYPFTEDQEIPETDWEVYLRETANAIVSQQTPQRLLEVRGRLYELLTHCIPPEIIMKGLLSELLHNCDGQLKGEVAQMAAYYEHRLQLGSKAIYHLEAFVAKFMALYKKFMEDGLEGMMF.

At lysine 20 the chain carries N6-acetyllysine. Residue serine 125 is modified to Phosphoserine.

It belongs to the activator 1 small subunits family. In terms of assembly, subunit of the RFC complex, an heteropentameric complex consisting of a large subunit RFC1 and four small subunits RFC2, RFC3, RFC4 and RFC5; the RFC complex interacts with PCNA. Forms an heterotetrameric complex with RFC2, RFC4 and RFC5; this complex has ATPase activity but is not stimulated by PCNA. The heterotetramer of subunits RFC2, RFC3, RFC4 and RFC5 interacts with RAD17. Interacts with CNTD1; this interaction facilitates crossover formation.

It is found in the nucleus. Its function is as follows. Subunit of the replication factor C (RFC) complex which acts during elongation of primed DNA templates by DNA polymerases delta and epsilon, and is necessary for ATP-dependent loading of proliferating cell nuclear antigen (PCNA) onto primed DNA. This is Replication factor C subunit 3 (Rfc3) from Mus musculus (Mouse).